The primary structure comprises 417 residues: Gamma-glutamyl phosphate reductase (417 aa).

It belongs to the gamma-glutamyl phosphate reductase family.

Its subcellular location is the cytoplasm. It carries out the reaction L-glutamate 5-semialdehyde + phosphate + NADP(+) = L-glutamyl 5-phosphate + NADPH + H(+). Its pathway is amino-acid biosynthesis; L-proline biosynthesis; L-glutamate 5-semialdehyde from L-glutamate: step 2/2. In terms of biological role, catalyzes the NADPH-dependent reduction of L-glutamate 5-phosphate into L-glutamate 5-semialdehyde and phosphate. The product spontaneously undergoes cyclization to form 1-pyrroline-5-carboxylate. The chain is Gamma-glutamyl phosphate reductase from Escherichia fergusonii (strain ATCC 35469 / DSM 13698 / CCUG 18766 / IAM 14443 / JCM 21226 / LMG 7866 / NBRC 102419 / NCTC 12128 / CDC 0568-73).